Here is a 108-residue protein sequence, read N- to C-terminus: Thiosulfate sulfurtransferase GlpE (108 aa).

In terms of domain architecture, Rhodanese spans 17-105 (QEKEAVLVDI…WQRQFPAEVA (89 aa)). Cys65 functions as the Cysteine persulfide intermediate in the catalytic mechanism.

Belongs to the GlpE family.

The protein localises to the cytoplasm. It catalyses the reaction thiosulfate + hydrogen cyanide = thiocyanate + sulfite + 2 H(+). It carries out the reaction thiosulfate + [thioredoxin]-dithiol = [thioredoxin]-disulfide + hydrogen sulfide + sulfite + 2 H(+). Transferase that catalyzes the transfer of sulfur from thiosulfate to thiophilic acceptors such as cyanide or dithiols. May function in a CysM-independent thiosulfate assimilation pathway by catalyzing the conversion of thiosulfate to sulfite, which can then be used for L-cysteine biosynthesis. This chain is Thiosulfate sulfurtransferase GlpE, found in Escherichia coli O45:K1 (strain S88 / ExPEC).